A 1366-amino-acid polypeptide reads, in one-letter code: Serine/threonine-protein kinase RUNKEL (1366 aa).

Residues isoleucine 10–valine 18 and lysine 33 each bind ATP. The active-site Proton acceptor is the aspartate 121. Disordered regions lie at residues threonine 276–leucine 356, glutamine 367–cysteine 386, leucine 398–lysine 502, and proline 524–lysine 549. The segment covering arginine 283–glycine 302 has biased composition (basic and acidic residues). Over residues serine 304–glycine 313 the composition is skewed to polar residues. Over residues glutamine 367–arginine 376 the composition is skewed to basic and acidic residues. The span at leucine 398 to glycine 414 shows a compositional bias: acidic residues. Residues glutamine 422 to histidine 433 show a composition bias toward basic and acidic residues. Polar residues predominate over residues valine 438–proline 454. HEAT repeat units lie at residues leucine 595–serine 633, leucine 638–threonine 675, glutamine 699–tyrosine 737, threonine 835–arginine 872, phenylalanine 878–asparagine 907, valine 908–valine 945, lysine 946–alanine 986, aspartate 992–isoleucine 1018, isoleucine 1019–glutamate 1057, isoleucine 1072–serine 1111, threonine 1279–lysine 1316, and glycine 1329–arginine 1366.

Belongs to the protein kinase superfamily. Ser/Thr protein kinase family. As to quaternary structure, binds to microtubules (MT). As to expression, expressed in proliferating tissues of seedlings, lateral roots, young rosette leaves, siliques, flowers, embryos and stems (including apical meristem).

It localises to the cytoplasm. Its subcellular location is the cytoskeleton. The protein localises to the phragmoplast. It is found in the spindle. It carries out the reaction L-seryl-[protein] + ATP = O-phospho-L-seryl-[protein] + ADP + H(+). The catalysed reaction is L-threonyl-[protein] + ATP = O-phospho-L-threonyl-[protein] + ADP + H(+). Essential protein that regulates phragmoplast microtubule organization during cell plate expansion in cytokinesis during cell division, both somatic and syncytial. Required for endosperm cellularisation. In pollen development, involved in cellularisation during microsporogenesis by regulating radial microtubules (MT) organization in microspore mother cells. Seems to not have kinase activity. The protein is Serine/threonine-protein kinase RUNKEL of Arabidopsis thaliana (Mouse-ear cress).